The sequence spans 73 residues: Large ribosomal subunit protein uL24 (73 aa).

Residues 53-65 (NPKGGFIKKEKPM) are compositionally biased toward basic and acidic residues. The interval 53 to 73 (NPKGGFIKKEKPMHISNVKKA) is disordered.

Belongs to the universal ribosomal protein uL24 family. As to quaternary structure, part of the 50S ribosomal subunit.

Functionally, one of two assembly initiator proteins, it binds directly to the 5'-end of the 23S rRNA, where it nucleates assembly of the 50S subunit. Its function is as follows. One of the proteins that surrounds the polypeptide exit tunnel on the outside of the subunit. The polypeptide is Large ribosomal subunit protein uL24 (Helicobacter pylori (strain J99 / ATCC 700824) (Campylobacter pylori J99)).